A 172-amino-acid polypeptide reads, in one-letter code: R-phycocyanin-1 beta chain (172 aa).

Position 72 is an N4-methylasparagine (Asn-72). Residue Cys-82 coordinates (2R,3E)-phycocyanobilin. A (2R,3E)-phycoerythrobilin-binding site is contributed by Cys-153.

The protein belongs to the phycobiliprotein family. Heterodimer of an alpha and a beta chain. Dimers further assemble into trimers and the trimers into hexamers. The basic functional unit of phycobiliproteins is a ring-shaped hexamer formed from two back-to-back trimers contacting via the alpha chain subunits. The trimers are composed of alpha/beta subunit heterodimers arranged around a three-fold axis of symmetry. The phycoerythrins also contain a gamma subunit which is located in the center of the hexamer. In terms of processing, contains two covalently linked bilin chromophores.

The protein resides in the plastid. It is found in the chloroplast thylakoid membrane. Functionally, light-harvesting photosynthetic bile pigment-protein from the phycobiliprotein complex (phycobilisome, PBS). Phycocyanin is the major phycobiliprotein in the PBS rod. The sequence is that of R-phycocyanin-1 beta chain (rpcB) from Porphyridium purpureum (Red alga).